A 466-amino-acid polypeptide reads, in one-letter code: MVMEKPSPLLVGREFVRQYYTLLNQAPDMLHRFYGKNSSYVHGGLDSNGKPADAVYGQKEIHRKVMSQNFTNCHTKIRHVDAHATLNDGVVVQVMGLLSNNNQALRRFMQTFVLAPEGSVANKFYVHNDIFRYQDEVFGGFVTEPQEESEEEVEEPEERQQTPEVVPDDSGTFYDQAVVSNDMEEHLEEPVAEPEPDPEPEPEQEPVSEIQEEKPEPVLEETVPEDAQKSSSPAPADIAQTVQEDLRTFSWASVTSKNLPPSGAVPVTGIPPHVVKVPASQPRPESKPESQIPPQRPQRDQRVREQRINIPPQRGPRPIREAGEQGDIEPRRMVRHPDSHQLFIGNLPHEVDKSELKDFFQSYGNVVELRINSGGKLPNFGFVVFDDSEPVQKVLSNRPIMFRGEVRLNVEEKKTRAAREGDRRDNRLRGPGGPRGGLGGGMRGPPRGGMVQKPGFGVGRGLAPRQ.

The NTF2 domain occupies 11–133; the sequence is VGREFVRQYY…FYVHNDIFRY (123 aa). Residues Lys36, Lys50, Lys59, Lys64, Lys76, and Lys123 each participate in a glycyl lysine isopeptide (Lys-Gly) (interchain with G-Cter in ubiquitin) cross-link. The segment at 142-225 is acidic disordered region; it reads VTEPQEESEE…EPVLEETVPE (84 aa). Thr143 carries the post-translational modification Phosphothreonine. 2 disordered regions span residues 144 to 172 and 184 to 243; these read EPQE…DSGT and EEHL…QTVQ. Composition is skewed to acidic residues over residues 145 to 157 and 185 to 206; these read PQEE…EEPE and EHLE…EQEP. The residue at position 149 (Ser149) is a Phosphoserine. Ser231, Ser232, Ser250, and Ser253 each carry phosphoserine. Residues 255–329 are disordered; that stretch reads TSKNLPPSGA…REAGEQGDIE (75 aa). 2 stretches are compositionally biased toward basic and acidic residues: residues 297-307 and 318-329; these read PQRDQRVREQR and PIREAGEQGDIE. Residues 340 to 415 enclose the RRM domain; it reads HQLFIGNLPH…VRLNVEEKKT (76 aa). Glycyl lysine isopeptide (Lys-Gly) (interchain with G-Cter in ubiquitin) cross-links involve residues Lys353 and Lys357. Ser373 carries the post-translational modification Phosphoserine. Lys376 is covalently cross-linked (Glycyl lysine isopeptide (Lys-Gly) (interchain with G-Cter in ubiquitin)). Lys376 carries the N6-acetyllysine; alternate modification. Residue Lys376 forms a Glycyl lysine isopeptide (Lys-Gly) (interchain with G-Cter in SUMO2); alternate linkage. A Glycyl lysine isopeptide (Lys-Gly) (interchain with G-Cter in ubiquitin); alternate cross-link involves residue Lys393. The interval 410–466 is RG-rich region; that stretch reads VEEKKTRAAREGDRRDNRLRGPGGPRGGLGGGMRGPPRGGMVQKPGFGVGRGLAPRQ. Residues 413 to 428 show a composition bias toward basic and acidic residues; sequence KKTRAAREGDRRDNRL. Positions 413 to 466 are disordered; that stretch reads KKTRAAREGDRRDNRLRGPGGPRGGLGGGMRGPPRGGMVQKPGFGVGRGLAPRQ. Arg429 carries the asymmetric dimethylarginine modification. Residues 430–447 are compositionally biased toward gly residues; it reads GPGGPRGGLGGGMRGPPR. Arg435 carries the post-translational modification Asymmetric dimethylarginine; alternate. Residues Arg435, Arg447, Arg460, and Arg465 each carry the omega-N-methylarginine; alternate modification. Dimethylated arginine; alternate is present on Arg460.

In terms of assembly, homodimer and oligomer. Component of a TAU mRNP complex, at least composed of IGF2BP1, ELAVL4 and G3BP1. Binds to the SH3 domain of Ras GTPase-activating protein (RASA1) in proliferating cells. No interaction in quiescent cells. Interacts (via NTF2 domain) with USP10; inhibiting stress granule formation by lowering G3BP1 valence. Interacts (via NTF2 domain) with CAPRIN1; promoting stress granule formation by lowering the saturation-concentration of G3BP1. Interacts (via NTF2 domain) with UBAP2L; promoting stress granule formation. Associates (via RG-rich region) with 40S ribosome subunits. Interacts with RPTOR and SPAG5; this complex is increased by oxidative stress. Interacts with ATXN2L. Interacts with STYXL1. Interacts with CGAS (via N-terminus); this interaction promotes the DNA-binding and activation of CGAS. Interacts (via C-terminus) with RIGI. Interacts with PABPC1. Interacts with QKI (isoforms QKI6 and QKI7); directing N(7)-methylguanine-containing mRNAs to stress granules. Requires Mg(2+) as cofactor. Phosphorylation of the acidic disordered region regulates stress granule assembly. RASA1-dependent phosphorylation of Ser-149 induces a conformational change that prevents self-association. Dephosphorylation after HRAS activation is required for stress granule assembly. Ser-149 phosphorylation induces partial nuclear localization. Post-translationally, arg-435 is dimethylated, probably to asymmetric dimethylarginine. In terms of processing, ubiquitinated by TRIM21 via 'Lys-63'-linked polyubiquitination in the NTF2 domain in response to heat shock, leading to stress granule disassembly: ubiquitination promotes interaction with the FAF2 adapter, followed by interaction with VCP, which extracts G3BP1 from stress granules, leading to stress granule disassembly. In case of prolonged stress, ubiquitination by TRIM21 leads to autophagy-dependent degradation of G3BP1 via recruitment of ubiquitinated G3BP1 by SQSTM1 and/or CALCOCO2 to autophagosomes.

Its subcellular location is the cytoplasm. It is found in the cytosol. It localises to the perikaryon. The protein localises to the stress granule. The protein resides in the nucleus. The enzyme catalyses ATP + H2O = ADP + phosphate + H(+). Its activity is regulated as follows. Under physiological conditions, G3BP1 adopts a compact state that is stabilized by intramolecular interactions between the RG-rich and the acidic regions that inhibit phase separation. Upon stress, polysomes disassemble and mRNAs are released in an unfolded protein-free state. Binding of unfolded mRNA to G3BP1 outcompetes the intramolecular interactions and RNA-bound G3BP1 adopts an expanded conformation in which the RG-rich region becomes exposed to engage in protein-protein and protein-RNA interactions, allowing physical cross-linking of RNA molecules to form protein-RNA condensates, leading to liquid-liquid phase separation (LLPS). In terms of biological role, protein involved in various processes, such as stress granule formation and innate immunity. Plays an essential role in stress granule formation. Stress granules are membraneless compartments that store mRNAs and proteins, such as stalled translation pre-initiation complexes, in response to stress. Promotes formation of stress granules phase-separated membraneless compartment by undergoing liquid-liquid phase separation (LLPS) upon unfolded RNA-binding: functions as a molecular switch that triggers RNA-dependent LLPS in response to a rise in intracellular free RNA concentrations. Also acts as an ATP- and magnesium-dependent helicase: unwinds DNA/DNA, RNA/DNA, and RNA/RNA substrates with comparable efficiency. Acts unidirectionally by moving in the 5' to 3' direction along the bound single-stranded DNA. Unwinds preferentially partial DNA and RNA duplexes having a 17 bp annealed portion and either a hanging 3' tail or hanging tails at both 5'- and 3'-ends. Plays an essential role in innate immunity by promoting CGAS and RIGI activity. Participates in the DNA-triggered cGAS/STING pathway by promoting the DNA binding and activation of CGAS. Triggers the condensation of cGAS, a process probably linked to the formation of membrane-less organelles. Also enhances RIGI-induced type I interferon production probably by helping RIGI at sensing pathogenic RNA. May also act as a phosphorylation-dependent sequence-specific endoribonuclease in vitro: Cleaves exclusively between cytosine and adenine and cleaves MYC mRNA preferentially at the 3'-UTR. This is Ras GTPase-activating protein-binding protein 1 (G3BP1) from Pongo abelii (Sumatran orangutan).